The following is a 286-amino-acid chain: Bifunctional protein FolD (286 aa).

Residues 166-168 (GQS), serine 191, and isoleucine 232 contribute to the NADP(+) site.

The protein belongs to the tetrahydrofolate dehydrogenase/cyclohydrolase family. As to quaternary structure, homodimer.

It carries out the reaction (6R)-5,10-methylene-5,6,7,8-tetrahydrofolate + NADP(+) = (6R)-5,10-methenyltetrahydrofolate + NADPH. The catalysed reaction is (6R)-5,10-methenyltetrahydrofolate + H2O = (6R)-10-formyltetrahydrofolate + H(+). Its pathway is one-carbon metabolism; tetrahydrofolate interconversion. Catalyzes the oxidation of 5,10-methylenetetrahydrofolate to 5,10-methenyltetrahydrofolate and then the hydrolysis of 5,10-methenyltetrahydrofolate to 10-formyltetrahydrofolate. The sequence is that of Bifunctional protein FolD from Alkalilimnicola ehrlichii (strain ATCC BAA-1101 / DSM 17681 / MLHE-1).